The primary structure comprises 238 residues: Probable transcriptional regulatory protein SAK_1658 (238 aa).

Belongs to the TACO1 family. YeeN subfamily.

The protein localises to the cytoplasm. The protein is Probable transcriptional regulatory protein SAK_1658 of Streptococcus agalactiae serotype Ia (strain ATCC 27591 / A909 / CDC SS700).